The sequence spans 923 residues: Cell cycle and apoptosis regulator protein 2 (923 aa).

Positions 1 to 35 (MSQFKRQRINPLPGGRNFSGTASTSLLGPPPGLLT) are disordered. Position 35 is a phosphothreonine (Thr35). At Lys112 the chain carries N6-acetyllysine; by KAT8. Residue Lys123 is modified to N6-methyllysine. Ser124 bears the Phosphoserine mark. Disordered stretches follow at residues 178–218 (LNRF…KKPR), 446–510 (KAAE…PAVI), and 568–643 (VSPP…SEDL). Arg180 is modified (omega-N-methylarginine). Residues 188-200 (GRLDQGRSDDYDS) show a composition bias toward basic and acidic residues. N6-acetyllysine; by KAT8 is present on Lys215. Residues 446–458 (KAAEAAPPTQEAQ) are compositionally biased toward low complexity. At Thr454 the chain carries Phosphothreonine; by ATM, ATR and CK2. Thr484 is modified (phosphothreonine). Position 569 is a phosphoserine (Ser569). A compositionally biased stretch (basic and acidic residues) spans 572–602 (EPEKEEAAKEEATKEEEAIKEEVVKEPKDEA). Residue Lys591 forms a Glycyl lysine isopeptide (Lys-Gly) (interchain with G-Cter in SUMO2 and SUMO3); alternate linkage. A Glycyl lysine isopeptide (Lys-Gly) (interchain with G-Cter in SUMO2); alternate cross-link involves residue Lys591. The segment at 610 to 670 (ESEAPLKEDG…EEFAGAKLED (61 aa)) is interaction with MCC. Residues Ser627, Ser675, Ser678, Ser681, Ser687, and Ser808 each carry the phosphoserine modification. The interaction with NR1D1 stretch occupies residues 704–923 (DCLLAFVFFD…VEKEEPAPSN (220 aa)). A coiled-coil region spans residues 829–909 (LENKIHTLEL…QLEIQRVVEK (81 aa)). Position 897 is a phosphothreonine (Thr897).

In terms of assembly, component of the DBIRD complex. Interacts with ZNF326/ZIRD; the interaction is direct. Interacts (via N-terminus) with SIRT1, which inhibits the deacetylation of substrates. Interacts (via N-terminus) with SUV39H1; this interaction abolishes the interaction with SIRT1. Component of a nuclear receptor-mediated transcription complex composed of at least ZNF335, CCAR2 and EMSY; the complex stimulates the transcription of nuclear receptor target genes such as SOX9 and HOXA1. Within the complex interacts with EMSY and interacts with ZNF335 (via C-terminus). Components of this complex may associate with components of a histone methylation complex to form a complex at least composed of ZNF335, HCFC1, CCAR2, EMSY, MKI67, RBBP5, ASH2L and WDR5. Within this complex, interacts with ASH2L. Interacts with NR1D1. Interacts (via N-terminus) with ESR1 and ESR2. Interacts (via N-terminus) with HDAC3 (via C-terminus). Interacts with HDAC1 and MED2F. Interacts with MCC. Interacts (via N-terminus) with NR1H2 and NR1H3 in a ligand-independent manner. Interacts with CSNK2A1. Interacts (via N-terminus) with p53/TP53. Interacts (via N-terminus) with BRCA1 (via the BRCT domains). Interacts (via N-terminus) with CHEK2 (via protein kinase domain). Interacts with PSEM3. Interacts (via N-terminus) with PSIA3 and SENP1. The sumoylated form shows a preferential interaction with SIRT1 as compared to its unmodified form. Interacts with CECR2; may form part of the CERF-1 and/or CEF-5 ISWI chromatin remodeling complexes in embryonic stem cells. Post-translationally, ATM/ATR-mediated phosphorylation at Thr-454 upon DNA damage promotes binding to SIRT1. Phosphorylation at Thr-454 promotes its sumoylation by switching the binding partner of CCAR2 from SENP1 to PIAS3. Acetylation at Lys-112 and Lys-215 by KAT8 prevents inhibitory binding to SIRT1 and increases its deacetylase activity. In terms of processing, genotoxic stress induces its sumoylation and sumoylation promotes the SIRT1-CCAR2 interaction which in turn inhibits SIRT1-mediated deacetylation of p53/TP53. Sumoylation leads to transcriptional activation of p53/TP53 by sequestering SIRT1 from p53/TP53. Desumoylated by SENP1. In terms of tissue distribution, expressed in gastric carcinoma tissue and the expression gradually increases with the progression of the carcinoma (at protein level). Expressed ubiquitously in normal tissues. Expressed in 84 to 100% of neoplastic breast, lung, and colon tissues.

It is found in the nucleus. The protein resides in the cytoplasm. It localises to the cytoskeleton. The protein localises to the spindle. Its function is as follows. Core component of the DBIRD complex, a multiprotein complex that acts at the interface between core mRNP particles and RNA polymerase II (RNAPII) and integrates transcript elongation with the regulation of alternative splicing: the DBIRD complex affects local transcript elongation rates and alternative splicing of a large set of exons embedded in (A + T)-rich DNA regions. Inhibits SIRT1 deacetylase activity leading to increasing levels of p53/TP53 acetylation and p53-mediated apoptosis. Inhibits SUV39H1 methyltransferase activity. Mediates ligand-dependent transcriptional activation by nuclear hormone receptors. Plays a critical role in maintaining genomic stability and cellular integrity following UV-induced genotoxic stress. Regulates the circadian expression of the core clock components NR1D1 and BMAL1. Enhances the transcriptional repressor activity of NR1D1 through stabilization of NR1D1 protein levels by preventing its ubiquitination and subsequent degradation. Represses the ligand-dependent transcriptional activation function of ESR2. Acts as a regulator of PCK1 expression and gluconeogenesis by a mechanism that involves, at least in part, both NR1D1 and SIRT1. Negatively regulates the deacetylase activity of HDAC3 and can alter its subcellular localization. Positively regulates the beta-catenin pathway (canonical Wnt signaling pathway) and is required for MCC-mediated repression of the beta-catenin pathway. Represses ligand-dependent transcriptional activation function of NR1H2 and NR1H3 and inhibits the interaction of SIRT1 with NR1H3. Plays an important role in tumor suppression through p53/TP53 regulation; stabilizes p53/TP53 by affecting its interaction with ubiquitin ligase MDM2. Represses the transcriptional activator activity of BRCA1. Inhibits SIRT1 in a CHEK2 and PSEM3-dependent manner and inhibits the activity of CHEK2 in vitro. The protein is Cell cycle and apoptosis regulator protein 2 (CCAR2) of Homo sapiens (Human).